The following is a 90-amino-acid chain: Probable Fe(2+)-trafficking protein (90 aa).

It belongs to the Fe(2+)-trafficking protein family.

Functionally, could be a mediator in iron transactions between iron acquisition and iron-requiring processes, such as synthesis and/or repair of Fe-S clusters in biosynthetic enzymes. In Pseudoalteromonas translucida (strain TAC 125), this protein is Probable Fe(2+)-trafficking protein.